The following is a 144-amino-acid chain: Bacilliredoxin BLi02323/BL05224 (144 aa).

This sequence belongs to the bacilliredoxin family.

In Bacillus licheniformis (strain ATCC 14580 / DSM 13 / JCM 2505 / CCUG 7422 / NBRC 12200 / NCIMB 9375 / NCTC 10341 / NRRL NRS-1264 / Gibson 46), this protein is Bacilliredoxin BLi02323/BL05224.